Reading from the N-terminus, the 208-residue chain is Large ribosomal subunit protein uL4 (208 aa).

The tract at residues 44–85 is disordered; sequence RQGTKKTKTRAEVRGGGKKPWRQKGTGRARQGSIRAPHWRGG. Residues 59-70 are compositionally biased toward basic residues; that stretch reads GGKKPWRQKGTG.

The protein belongs to the universal ribosomal protein uL4 family. As to quaternary structure, part of the 50S ribosomal subunit.

In terms of biological role, one of the primary rRNA binding proteins, this protein initially binds near the 5'-end of the 23S rRNA. It is important during the early stages of 50S assembly. It makes multiple contacts with different domains of the 23S rRNA in the assembled 50S subunit and ribosome. Forms part of the polypeptide exit tunnel. The polypeptide is Large ribosomal subunit protein uL4 (Mesoplasma florum (strain ATCC 33453 / NBRC 100688 / NCTC 11704 / L1) (Acholeplasma florum)).